A 304-amino-acid polypeptide reads, in one-letter code: D-alanine--D-alanine ligase (304 aa).

In terms of domain architecture, ATP-grasp spans 103–301 (KQVWLALGLP…FDDLVWRILE (199 aa)). 132–187 (VEMLGFPVIIKPAKEGSSVGVSRVFALEHLEEAVALAARYEGELLMEQLIEGDELT) is a binding site for ATP. Mg(2+)-binding residues include aspartate 254, glutamate 268, and asparagine 270.

The protein belongs to the D-alanine--D-alanine ligase family. It depends on Mg(2+) as a cofactor. The cofactor is Mn(2+).

It is found in the cytoplasm. The enzyme catalyses 2 D-alanine + ATP = D-alanyl-D-alanine + ADP + phosphate + H(+). The protein operates within cell wall biogenesis; peptidoglycan biosynthesis. Functionally, cell wall formation. The protein is D-alanine--D-alanine ligase of Xylella fastidiosa (strain Temecula1 / ATCC 700964).